Here is a 142-residue protein sequence, read N- to C-terminus: Complexin (142 aa).

Disordered stretches follow at residues 13-70 (QLSA…MRQD) and 83-105 (IVEA…PEEL). Positions 29 to 138 (GDDKEKAEEE…NELKTQIEGK (110 aa)) form a coiled coil. The segment covering 31-70 (DKEKAEEEERERQEAIKEAEDRRKEKHRKMEEEREKMRQD) has biased composition (basic and acidic residues). The residue at position 139 (cysteine 139) is a Cysteine methyl ester. Cysteine 139 carries S-farnesyl cysteine lipidation. Residues 140 to 142 (VMQ) constitute a propeptide, removed in mature form.

Belongs to the complexin/synaphin family. As to quaternary structure, binds to the SNARE core complex containing Snap25, synaptobrevin and Syx1A.

The protein localises to the membrane. In terms of biological role, positively regulates a late step in synaptic vesicle exocytosis. The protein is Complexin (cpx) of Drosophila melanogaster (Fruit fly).